A 565-amino-acid chain; its full sequence is Deformed epidermal autoregulatory factor 1 homolog (565 aa).

2 disordered regions span residues 34 to 62 (GGEA…ETPR) and 162 to 190 (GLKG…KGGT). The span at 169–181 (PLTPGPQSPPTPL) shows a compositional bias: pro residues. Residue Thr-171 is modified to Phosphothreonine. Ser-176 carries the post-translational modification Phosphoserine. At Thr-179 the chain carries Phosphothreonine. Residues 193–273 (NWDPSVYDSE…QCLIQDGILN (81 aa)) enclose the SAND domain. A Nuclear localization signal motif is present at residues 301 to 316 (KRRKKENELPTTPVKK). Positions 403–478 (IAPFPEAALP…QLKTLFEQAK (76 aa)) are interaction with LMO4. The residue at position 432 (Thr-432) is a Phosphothreonine. Ser-448 bears the Phosphoserine mark. 8 residues coordinate Zn(2+): Cys-504, Cys-507, Cys-515, Cys-518, Cys-524, Cys-528, His-536, and Cys-540. An MYND-type zinc finger spans residues 504-540 (CVNCGREAMNECTGCHKVNYCSTFCQRKDWKDHQHIC).

Homodimer. Interacts with LMO4; LMO4 blocks export from nucleus. Interacts with LMO2 and CLIM2. May interact with the corepressors NCOR1 and NCRO2. Identified in a complex with XRCC5 and XRCC6. Interacts (via the SAND domain) with the DNA-PK complex subunit XRCC6; the interaction is direct and may be inhibited by DNA-binding. In terms of processing, may be phosphorylated by DNA-PK complex in a DNA independent manner (in vitro).

Its subcellular location is the nucleus. Functionally, transcription factor that binds to sequence with multiple copies of 5'-TTC[CG]G-3' present in its own promoter and that of the HNRPA2B1 gene. Down-regulates transcription of these genes. Binds to the retinoic acid response element (RARE) 5'-AGGGTTCACCGAAAGTTCA-3'. Activates the proenkephalin gene independently of promoter binding, probably through protein-protein interaction. Regulates epithelial cell proliferation and side-branching in the mammary gland. Required for neural tube closure and skeletal patterning. Controls the expression of peripheral tissue antigens in pancreatic lymph nodes. Transcriptional activator of EIF4G3. May also involved in behavior. In Pan troglodytes (Chimpanzee), this protein is Deformed epidermal autoregulatory factor 1 homolog (DEAF1).